Here is a 496-residue protein sequence, read N- to C-terminus: Lysine--tRNA ligase (496 aa).

Glutamate 409 and glutamate 416 together coordinate Mg(2+).

The protein belongs to the class-II aminoacyl-tRNA synthetase family. As to quaternary structure, homodimer. It depends on Mg(2+) as a cofactor.

It is found in the cytoplasm. It catalyses the reaction tRNA(Lys) + L-lysine + ATP = L-lysyl-tRNA(Lys) + AMP + diphosphate. This chain is Lysine--tRNA ligase, found in Streptococcus pneumoniae (strain Hungary19A-6).